The chain runs to 89 residues: Repressor protein (89 aa).

A DNA-binding region (H-T-H motif) is located at residues 29 to 52 (SGDIARNTGYSRRRISDRCTVLVD).

Its function is as follows. Transcriptional repressor expressed under lysogenic conditions, which specifically binds the host DNA site 'RRGAAG'. The binding occurs cooperatively, probably as 2 copies of a dimer. Possibly prevents RNA polymerase access to the promoters for lytic cell cycle transcription. The protein is Repressor protein (T6) of Halobacterium salinarum (Halobacterium halobium).